A 111-amino-acid chain; its full sequence is MRPTPKVEIWKSPVPYLFGGLFLLVLLIALALLSLVCTHQKPSSSSNNNHMDEEDDVGDKDAKPITREYLPKIVVILAGDNKPTCLAVPVVVPPPTSIFRCNCDNVTVIST.

Residues 1 to 16 (MRPTPKVEIWKSPVPY) are Extracellular-facing. A helical membrane pass occupies residues 17 to 37 (LFGGLFLLVLLIALALLSLVC). Topologically, residues 38–111 (THQKPSSSSN…NCDNVTVIST (74 aa)) are cytoplasmic. Positions 40-49 (QKPSSSSNNN) are enriched in polar residues. Residues 40–63 (QKPSSSSNNNHMDEEDDVGDKDAK) form a disordered region. A VIMAG; degenerate motif is present at residues 75 to 79 (VILAG).

It belongs to the GLUTAMINE DUMPER 1 (TC 9.B.60) family. Expressed in the vascular tissues.

The protein localises to the membrane. Its function is as follows. Probable subunit of an amino acid transporter involved in the regulation of the amino acid metabolism. Stimulates amino acid export by activating nonselective amino acid facilitators. In Arabidopsis thaliana (Mouse-ear cress), this protein is Protein GLUTAMINE DUMPER 6 (GDU6).